Consider the following 246-residue polypeptide: Heavy metal-associated isoprenylated plant protein 8 (246 aa).

The segment at 1–31 is disordered; that stretch reads MGKNKQNGESDNKSEKKNQKNGDSSVDKSDK. An HMA 1 domain is found at 35-99; that stretch reads CKEIVLKVYM…RVQKKFSRNA (65 aa). Residues Cys-46 and Cys-49 each coordinate a metal cation. The interval 96-122 is disordered; the sequence is SRNAEMISPKHNPKQDQKEPQQKKESA. The segment covering 108–122 has biased composition (basic and acidic residues); the sequence is PKQDQKEPQQKKESA. The region spanning 125-189 is the HMA 2 domain; it reads IKTAILRMNM…IKKKLGKHAE (65 aa). A metal cation is bound by residues Cys-136 and Cys-139. The segment at 191–226 is disordered; that stretch reads LSQITEKGKDNNKKNNNKKEESDGNKIFSYPPQYSS. Positions 196-214 are enriched in basic and acidic residues; the sequence is EKGKDNNKKNNNKKEESDG. The residue at position 243 (Cys-243) is a Cysteine methyl ester. A lipid anchor (S-farnesyl cysteine) is attached at Cys-243. Residues 244–246 constitute a propeptide, removed in mature form; the sequence is SIM.

This sequence belongs to the HIPP family.

Functionally, heavy-metal-binding protein. This Arabidopsis thaliana (Mouse-ear cress) protein is Heavy metal-associated isoprenylated plant protein 8.